A 339-amino-acid polypeptide reads, in one-letter code: Ribosomal RNA small subunit methyltransferase H (339 aa).

Residues 56–58 (GGH), aspartate 76, phenylalanine 102, aspartate 123, and glutamine 130 contribute to the S-adenosyl-L-methionine site. 2 disordered regions span residues 274 to 309 (RHSR…KAEV) and 320 to 339 (LRVA…PQHS). Over residues 325 to 339 (RTDTPYNTDPSPQHS) the composition is skewed to polar residues.

Belongs to the methyltransferase superfamily. RsmH family.

The protein localises to the cytoplasm. The catalysed reaction is cytidine(1402) in 16S rRNA + S-adenosyl-L-methionine = N(4)-methylcytidine(1402) in 16S rRNA + S-adenosyl-L-homocysteine + H(+). In terms of biological role, specifically methylates the N4 position of cytidine in position 1402 (C1402) of 16S rRNA. This is Ribosomal RNA small subunit methyltransferase H from Psychrobacter sp. (strain PRwf-1).